The primary structure comprises 235 residues: Uridylate kinase (235 aa).

ATP is bound at residue 9–12 (KLSG). An involved in allosteric activation by GTP region spans residues 17-22 (GKDGYG). Residue Gly51 participates in UMP binding. Gly52 and Arg56 together coordinate ATP. UMP is bound by residues Asp71 and 132-139 (TGNPYFTT). ATP contacts are provided by Thr159, Tyr165, and Asp168.

Belongs to the UMP kinase family. As to quaternary structure, homohexamer.

It localises to the cytoplasm. It carries out the reaction UMP + ATP = UDP + ADP. Its pathway is pyrimidine metabolism; CTP biosynthesis via de novo pathway; UDP from UMP (UMPK route): step 1/1. Allosterically activated by GTP. Inhibited by UTP. Catalyzes the reversible phosphorylation of UMP to UDP. The chain is Uridylate kinase from Chlorobium luteolum (strain DSM 273 / BCRC 81028 / 2530) (Pelodictyon luteolum).